Here is a 293-residue protein sequence, read N- to C-terminus: tRNA pseudouridine synthase A (293 aa).

The active-site Nucleophile is Asp-60. Tyr-118 contacts substrate.

The protein belongs to the tRNA pseudouridine synthase TruA family. As to quaternary structure, homodimer.

The enzyme catalyses uridine(38/39/40) in tRNA = pseudouridine(38/39/40) in tRNA. Formation of pseudouridine at positions 38, 39 and 40 in the anticodon stem and loop of transfer RNAs. The polypeptide is tRNA pseudouridine synthase A (Rippkaea orientalis (strain PCC 8801 / RF-1) (Cyanothece sp. (strain PCC 8801))).